Reading from the N-terminus, the 493-residue chain is Xaa-Pro dipeptidase (493 aa).

Position 2 is an N-acetylalanine (Ala-2). Ser-167 carries the phosphoserine modification. Residue His-255 coordinates a dipeptide. 3 residues coordinate Mn(2+): Asp-276, Asp-287, and His-370. Residue Asp-287 participates in a dipeptide binding. His-377 and Arg-398 together coordinate a dipeptide. Mn(2+) contacts are provided by Glu-412 and Glu-452.

This sequence belongs to the peptidase M24B family. Eukaryotic-type prolidase subfamily. Homodimer. Mn(2+) serves as cofactor.

It carries out the reaction Xaa-L-Pro dipeptide + H2O = an L-alpha-amino acid + L-proline. Its activity is regulated as follows. Specifically inhibited by the pseudodipeptide CQ31. Inhibition by CQ31 indirectly activates the CARD8 inflammasome: dipeptide accumulation following PEPD inactivation weaky inhibit dipeptidyl peptidases DDP8 and DPP9, relieving DPP8- and/or DPP9-mediated inhibition of CARD8. Its function is as follows. Dipeptidase that catalyzes the hydrolysis of dipeptides with a prolyl (Xaa-Pro) or hydroxyprolyl residue in the C-terminal position. The preferred dipeptide substrate is Gly-Pro, but other Xaa-Pro dipeptides, such as Ala-Pro, Met-Pro, Phe-Pro, Val-Pro and Leu-Pro, can be cleaved. Plays an important role in collagen metabolism because the high level of iminoacids in collagen. This is Xaa-Pro dipeptidase from Homo sapiens (Human).